The following is a 561-amino-acid chain: Cytochrome P450 monooxygenase avaL (561 aa).

A helical membrane pass occupies residues 19–39; the sequence is IAASCALVCIVSACYVVWSLL. Cys-508 serves as a coordination point for heme.

This sequence belongs to the cytochrome P450 family. Heme is required as a cofactor.

Its subcellular location is the membrane. It functions in the pathway secondary metabolite biosynthesis. In terms of biological role, cytochrome P450 monooxygenase; part of the cluster that mediates the biosynthesis of a highly modified cyclo-arginine-tryptophan dipeptide (cRW). The first step of the pathway is perfornmed by the arginine-containing cyclodipeptide synthase (RCPDS) avaA that acts as the scaffold-generating enzyme and is responsible for formation of the cyclo-Arg-Trp (cRW) diketopiperazine. AvaB then acts as a multifunctional flavoenzyme that is responsible for generating the cyclo-Arg-formylkynurenine DKP, which can be deformylated by avaC. AvaB then further catalyzes an additional N-oxidation followed by cyclization and dehydration. The next step is an N-acetylation of the guanidine group catalyzed by the arginine N-acetyltransferase avaD. The roles of the additional enzymes identified within the ava cluster still have to be determined. The polypeptide is Cytochrome P450 monooxygenase avaL (Aspergillus versicolor).